A 408-amino-acid polypeptide reads, in one-letter code: LL-diaminopimelate aminotransferase (408 aa).

Positions 15 and 42 each coordinate substrate. Residues Tyr-72, 108 to 109 (SK), Tyr-132, Asn-187, Tyr-218, and 246 to 248 (SFS) each bind pyridoxal 5'-phosphate. Positions 109, 132, and 187 each coordinate substrate. Position 249 is an N6-(pyridoxal phosphate)lysine (Lys-249). 2 residues coordinate pyridoxal 5'-phosphate: Arg-257 and Asn-292. Substrate-binding residues include Asn-292 and Arg-388.

This sequence belongs to the class-I pyridoxal-phosphate-dependent aminotransferase family. LL-diaminopimelate aminotransferase subfamily. Homodimer. The cofactor is pyridoxal 5'-phosphate.

It carries out the reaction (2S,6S)-2,6-diaminopimelate + 2-oxoglutarate = (S)-2,3,4,5-tetrahydrodipicolinate + L-glutamate + H2O + H(+). It functions in the pathway amino-acid biosynthesis; L-lysine biosynthesis via DAP pathway; LL-2,6-diaminopimelate from (S)-tetrahydrodipicolinate (aminotransferase route): step 1/1. Involved in the synthesis of meso-diaminopimelate (m-DAP or DL-DAP), required for both lysine and peptidoglycan biosynthesis. Catalyzes the direct conversion of tetrahydrodipicolinate to LL-diaminopimelate. This chain is LL-diaminopimelate aminotransferase, found in Prochlorococcus marinus subsp. pastoris (strain CCMP1986 / NIES-2087 / MED4).